A 155-amino-acid polypeptide reads, in one-letter code: SsrA-binding protein (155 aa).

It belongs to the SmpB family.

It is found in the cytoplasm. In terms of biological role, required for rescue of stalled ribosomes mediated by trans-translation. Binds to transfer-messenger RNA (tmRNA), required for stable association of tmRNA with ribosomes. tmRNA and SmpB together mimic tRNA shape, replacing the anticodon stem-loop with SmpB. tmRNA is encoded by the ssrA gene; the 2 termini fold to resemble tRNA(Ala) and it encodes a 'tag peptide', a short internal open reading frame. During trans-translation Ala-aminoacylated tmRNA acts like a tRNA, entering the A-site of stalled ribosomes, displacing the stalled mRNA. The ribosome then switches to translate the ORF on the tmRNA; the nascent peptide is terminated with the 'tag peptide' encoded by the tmRNA and targeted for degradation. The ribosome is freed to recommence translation, which seems to be the essential function of trans-translation. The polypeptide is SsrA-binding protein (Bordetella bronchiseptica (strain ATCC BAA-588 / NCTC 13252 / RB50) (Alcaligenes bronchisepticus)).